The following is a 198-amino-acid chain: GTP cyclohydrolase-2 (198 aa).

49-53 (RVHSE) lines the GTP pocket. Residues cysteine 54, cysteine 65, and cysteine 67 each contribute to the Zn(2+) site. Residues glutamine 70, 92-94 (EGR), and threonine 114 contribute to the GTP site. Aspartate 126 acts as the Proton acceptor in catalysis. Arginine 128 serves as the catalytic Nucleophile. GTP contacts are provided by threonine 149 and lysine 154.

Belongs to the GTP cyclohydrolase II family. Homodimer. Requires Zn(2+) as cofactor.

It catalyses the reaction GTP + 4 H2O = 2,5-diamino-6-hydroxy-4-(5-phosphoribosylamino)-pyrimidine + formate + 2 phosphate + 3 H(+). Its pathway is cofactor biosynthesis; riboflavin biosynthesis; 5-amino-6-(D-ribitylamino)uracil from GTP: step 1/4. Catalyzes the conversion of GTP to 2,5-diamino-6-ribosylamino-4(3H)-pyrimidinone 5'-phosphate (DARP), formate and pyrophosphate. The sequence is that of GTP cyclohydrolase-2 from Escherichia fergusonii (strain ATCC 35469 / DSM 13698 / CCUG 18766 / IAM 14443 / JCM 21226 / LMG 7866 / NBRC 102419 / NCTC 12128 / CDC 0568-73).